Consider the following 402-residue polypeptide: uncharacterized protein (402 aa).

Helical transmembrane passes span 23 to 43, 52 to 72, 90 to 110, 121 to 141, 158 to 178, 180 to 200, 228 to 248, 255 to 275, 282 to 302, 309 to 329, 351 to 371, and 375 to 395; these read IVSV…PLAV, LGYG…ATLL, VLYG…SVAI, LLVG…AAIG, WNGI…VLLV, WLGL…GFAL, GMGL…ITLY, ANAV…RLLF, LGGF…LLLL, WVGL…FPAF, LFVD…ANLF, and SMFL…IALH.

This sequence belongs to the major facilitator superfamily. YhhS family.

Its subcellular location is the cell inner membrane. This is an uncharacterized protein from Pseudomonas aeruginosa (strain UCBPP-PA14).